The primary structure comprises 122 residues: Large ribosomal subunit protein uL14 (122 aa).

This sequence belongs to the universal ribosomal protein uL14 family. In terms of assembly, part of the 50S ribosomal subunit. Forms a cluster with proteins L3 and L19. In the 70S ribosome, L14 and L19 interact and together make contacts with the 16S rRNA in bridges B5 and B8.

Functionally, binds to 23S rRNA. Forms part of two intersubunit bridges in the 70S ribosome. In Rhodopseudomonas palustris (strain HaA2), this protein is Large ribosomal subunit protein uL14.